We begin with the raw amino-acid sequence, 195 residues long: Fe/S biogenesis protein NfuA (195 aa).

[4Fe-4S] cluster is bound by residues Cys-152 and Cys-155.

Belongs to the NfuA family. In terms of assembly, homodimer. Requires [4Fe-4S] cluster as cofactor.

In terms of biological role, involved in iron-sulfur cluster biogenesis. Binds a 4Fe-4S cluster, can transfer this cluster to apoproteins, and thereby intervenes in the maturation of Fe/S proteins. Could also act as a scaffold/chaperone for damaged Fe/S proteins. The protein is Fe/S biogenesis protein NfuA of Vibrio cholerae serotype O1 (strain ATCC 39315 / El Tor Inaba N16961).